The sequence spans 211 residues: Mitotic spindle assembly checkpoint protein MAD2B (211 aa).

One can recognise an HORMA domain in the interval 13–203 (QVVADVLSEF…SDILKMQLYV (191 aa)). The tract at residues 21 to 155 (EFLEVAVHLI…FTVLVHTREA (135 aa)) is mediates interaction with REV1 and REV3L and homodimerization.

In terms of assembly, homooligomer. Heterodimer with REV3L. This dimer forms the minimal DNA polymerase zeta complex (Pol-zeta2), with REV3L bearing DNA polymerase catalytic activity, although its activity is very low in this context. Component of the tetrameric Pol-zeta complex (Pol-zeta4), which consists of REV3L, MAD2L2, POLD2 and POLD3; Pol-zeta4 is the fully active form of DNA polymerase zeta. Component of the shieldin complex, consisting of SHLD1, SHLD2, SHLD3 and MAD2L2/REV7. Within the complex, SHLD2 forms a scaffold which interacts with a SHLD3-MAD2L2 subcomplex via its N-terminus, and with SHLD1 via its C-terminus. Interacts with REV1. Interacts with ADAM9. Interacts with CHAMP1. Interacts with FZR1 (in complex with the anaphase promoting complex APC). May interact with CDC20. Interacts with RAN. Interacts with ELK1; the interaction is direct and recruits MAD2L2 to ELK1-specific promoters. May interact with the JNK kinases MAPK8 and/or MAPK9 to stimulate ELK1 phosphorylation and transcriptional activity upon DNA damage. Interacts with TCF7L2; prevents its binding to promoters and negatively modulates its transcriptional activity. Interacts with YY1AP1. Interacts with PRCC; the interaction is direct. Interacts with POGZ. Interacts with ASTE1.

It localises to the nucleus. The protein localises to the cytoplasm. It is found in the cytoskeleton. The protein resides in the spindle. Its function is as follows. Adapter protein able to interact with different proteins and involved in different biological processes. Mediates the interaction between the error-prone DNA polymerase zeta catalytic subunit REV3L and the inserter polymerase REV1, thereby mediating the second polymerase switching in translesion DNA synthesis. Translesion DNA synthesis releases the replication blockade of replicative polymerases, stalled in presence of DNA lesions. Component of the shieldin complex, which plays an important role in repair of DNA double-stranded breaks (DSBs). During G1 and S phase of the cell cycle, the complex functions downstream of TP53BP1 to promote non-homologous end joining (NHEJ) and suppress DNA end resection. Mediates various NHEJ-dependent processes including immunoglobulin class-switch recombination, and fusion of unprotected telomeres. May also regulate another aspect of cellular response to DNA damage through regulation of the JNK-mediated phosphorylation and activation of the transcriptional activator ELK1. Inhibits the FZR1- and probably CDC20-mediated activation of the anaphase promoting complex APC thereby regulating progression through the cell cycle. Regulates TCF7L2-mediated gene transcription and may play a role in epithelial-mesenchymal transdifferentiation. In Rattus norvegicus (Rat), this protein is Mitotic spindle assembly checkpoint protein MAD2B (Mad2l2).